Here is a 155-residue protein sequence, read N- to C-terminus: V-type proton ATPase 16 kDa proteolipid subunit c (155 aa).

Over 1–10 the chain is Lumenal; the sequence is MADIKNNPEY. The helical transmembrane segment at 11–33 threads the bilayer; that stretch reads SSFFGVMGASSAMVFSAMGAAYG. The Cytoplasmic portion of the chain corresponds to 34–55; it reads TAKSGTGIAAMSVMRPELIMKS. Residues 56 to 76 form a helical membrane-spanning segment; it reads IIPVVMAGIIAIYGLVVAVLI. At 77 to 92 the chain is on the lumenal side; it reads ANSLTDGITLYRSFLQ. Residues 93–114 form a helical membrane-spanning segment; it reads LGAGLSVGLSGLAAGFAIGIVG. Topologically, residues 115 to 131 are cytoplasmic; sequence DAGVRGTAQQPRLFVGM. Residues 132 to 152 form a helical membrane-spanning segment; it reads ILILIFAEVLGLYGLIVALIL. The Lumenal portion of the chain corresponds to 153–155; sequence STK.

It belongs to the V-ATPase proteolipid subunit family. In terms of assembly, V-ATPase is a heteromultimeric enzyme made up of two complexes: the ATP-hydrolytic V1 complex and the proton translocation V0 complex. The V1 complex consists of three catalytic AB heterodimers that form a heterohexamer, three peripheral stalks each consisting of EG heterodimers, one central rotor including subunits D and F, and the regulatory subunits C and H. The proton translocation complex V0 consists of the proton transport subunit a, a ring of proteolipid subunits c9c'', rotary subunit d, subunits e and f, and the accessory subunits ATP6AP1/Ac45 and ATP6AP2/PRR. Interacts with the V0 complex V-ATPase subunit a4 ATP6V0A4. Interacts with LASS2. Interacts with RNF182; this interaction leads to ubiquitination and degradation via the proteasome pathway. In terms of processing, ubiquitinated by RNF182, leading to its degradation via the ubiquitin-proteasome pathway.

It is found in the cytoplasmic vesicle. The protein localises to the clathrin-coated vesicle membrane. Its subcellular location is the secretory vesicle. It localises to the synaptic vesicle membrane. Proton-conducting pore forming subunit of the V0 complex of vacuolar(H+)-ATPase (V-ATPase), a multisubunit enzyme composed of a peripheral complex (V1) that hydrolyzes ATP and a membrane integral complex (V0) that translocates protons. V-ATPase is responsible for acidifying and maintaining the pH of intracellular compartments and in some cell types, is targeted to the plasma membrane, where it is responsible for acidifying the extracellular environment. This is V-type proton ATPase 16 kDa proteolipid subunit c (Atp6v0c) from Mus musculus (Mouse).